The sequence spans 181 residues: Oligoribonuclease (181 aa).

The Exonuclease domain maps to 8–171 (LIWVDLEMTG…DDIRESIAEL (164 aa)). Tyr-129 is an active-site residue.

The protein belongs to the oligoribonuclease family.

The protein localises to the cytoplasm. 3'-to-5' exoribonuclease specific for small oligoribonucleotides. In Vibrio campbellii (strain ATCC BAA-1116), this protein is Oligoribonuclease.